A 394-amino-acid polypeptide reads, in one-letter code: NADH dehydrogenase [ubiquinone] iron-sulfur protein 2 (394 aa).

Polar residues predominate over residues 1 to 16 (MTTKNRQIKNFTSNFG). Residues 1-22 (MTTKNRQIKNFTSNFGPQHPAA) form a disordered region.

It belongs to the complex I 49 kDa subunit family. As to quaternary structure, complex I is composed of about 45 different subunits. This is a component of the iron-sulfur (IP) fragment of the enzyme.

The protein localises to the mitochondrion. The catalysed reaction is a ubiquinone + NADH + 5 H(+)(in) = a ubiquinol + NAD(+) + 4 H(+)(out). Its function is as follows. Core subunit of the mitochondrial membrane respiratory chain NADH dehydrogenase (Complex I) that is believed to belong to the minimal assembly required for catalysis. Complex I functions in the transfer of electrons from NADH to the respiratory chain. The immediate electron acceptor for the enzyme is believed to be ubiquinone. Component of the iron-sulfur (IP) fragment of the enzyme. The polypeptide is NADH dehydrogenase [ubiquinone] iron-sulfur protein 2 (NAD7) (Nicotiana sylvestris (Wood tobacco)).